The sequence spans 338 residues: UPF0104 membrane protein MTH_1261 (338 aa).

A run of 8 helical transmembrane segments spans residues 6-26, 36-56, 124-144, 149-169, 231-251, 254-274, 275-295, and 310-330; these read AILIVIGVVALAAMILIIGPG, DPVYVLMAVVLEFIILALFTL, LDTFPFIFLAVLTIIGIVLYF, WILAALIASVVIIVVAFFLAL, ISFLIWILEIIRVYLIFTAFG, ISLLVIAEVFILATLIGMIPL, LPGGLGAVDGIMIVFYSYAGV, and ISFWMISAMGVAAIPYFGSSV.

The protein belongs to the UPF0104 family.

It is found in the cell membrane. In Methanothermobacter thermautotrophicus (strain ATCC 29096 / DSM 1053 / JCM 10044 / NBRC 100330 / Delta H) (Methanobacterium thermoautotrophicum), this protein is UPF0104 membrane protein MTH_1261.